Consider the following 352-residue polypeptide: ATP synthase subunit a 2 (352 aa).

Residues 1 to 26 form the signal peptide; that stretch reads MRKKAISRILALVVPVLLSLNSQAFA. 7 consecutive transmembrane segments (helical) span residues 112 to 132, 172 to 192, 195 to 215, 232 to 252, 264 to 284, 289 to 309, and 310 to 330; these read VVMI…AGAS, FLPY…LGLI, GATA…TFVI, HLTA…EILG, LFAN…ISFI, IVAV…ELFV, and AFLQ…LATA.

It belongs to the ATPase A chain family. F-type ATPases have 2 components, CF(1) - the catalytic core - and CF(0) - the membrane proton channel. CF(1) has five subunits: alpha(3), beta(3), gamma(1), delta(1), epsilon(1). CF(0) has four main subunits: a, b, b' and c.

The protein resides in the cell inner membrane. Key component of the proton channel; it plays a direct role in the translocation of protons across the membrane. The chain is ATP synthase subunit a 2 from Chlorobaculum tepidum (strain ATCC 49652 / DSM 12025 / NBRC 103806 / TLS) (Chlorobium tepidum).